We begin with the raw amino-acid sequence, 30 residues long: Kalata-B5 (30 aa).

Positions 1 to 30 (GTPCGESCVYIPCISGVIGCSCTDKVCYLN) form a cross-link, cyclopeptide (Gly-Asn). Disulfide bonds link C4-C20, C8-C22, and C13-C27.

Post-translationally, this is a cyclic peptide.

Probably participates in a plant defense mechanism. The protein is Kalata-B5 of Oldenlandia affinis.